Reading from the N-terminus, the 244-residue chain is Phosphoadenosine 5'-phosphosulfate reductase (244 aa).

Cysteine 239 serves as the catalytic Nucleophile; cysteine thiosulfonate intermediate.

Belongs to the PAPS reductase family. CysH subfamily.

The protein resides in the cytoplasm. The catalysed reaction is [thioredoxin]-disulfide + sulfite + adenosine 3',5'-bisphosphate + 2 H(+) = [thioredoxin]-dithiol + 3'-phosphoadenylyl sulfate. It participates in sulfur metabolism; hydrogen sulfide biosynthesis; sulfite from sulfate: step 3/3. In terms of biological role, catalyzes the formation of sulfite from phosphoadenosine 5'-phosphosulfate (PAPS) using thioredoxin as an electron donor. The polypeptide is Phosphoadenosine 5'-phosphosulfate reductase (Zymomonas mobilis subsp. mobilis (strain ATCC 31821 / ZM4 / CP4)).